A 503-amino-acid chain; its full sequence is Proton-coupled zinc antiporter SLC30A1 (503 aa).

The Cytoplasmic segment spans residues 1-10 (MGCWGRNRGR). The chain crosses the membrane as a helical span at residues 11–31 (LLCMLLLTFMFMVLEVVVSRV). Topologically, residues 32–35 (TASL) are extracellular. The chain crosses the membrane as a helical span at residues 36–56 (AMLSDSFHMLSDVLALVVALV). Zn(2+)-binding residues include His-43 and Asp-47. The Cytoplasmic segment spans residues 57-78 (AERFARRTHATQKNTFGWIRAE). Residues 79–99 (VMGALVNAIFLTGLCFAILLE) traverse the membrane as a helical segment. Over 100-113 (AVERFIEPHEMQQP) the chain is Extracellular. A helical transmembrane segment spans residues 114–134 (LVVLSVGVAGLLVNVLGLCLF). The Cytoplasmic segment spans residues 135–243 (HHHSGEGQGA…RAGQLNMRGV (109 aa)). Residues 140 to 213 (EGQGAGHGHS…PEKLRSDDPV (74 aa)) are disordered. A 6 X 2 AA approximate repeats of H-G region spans residues 145-156 (GHGHSHGHGHGH). The span at 147–165 (GHSHGHGHGHLAKGARKAG) shows a compositional bias: basic residues. Residues 184 to 196 (TNTLVANTSNSNG) are compositionally biased toward polar residues. Basic and acidic residues predominate over residues 200–211 (DQAEPEKLRSDD). A helical transmembrane segment spans residues 244–264 (FLHVLGDALGSVIVVVNALVF). Zn(2+)-binding residues include His-246 and Asp-250. Topologically, residues 265–303 (YFNWKGCTEDDFCTNPCFPDPCKSSVEIINSTQAPMRDA) are extracellular. N-linked (GlcNAc...) asparagine glycosylation occurs at Asn-294. A helical membrane pass occupies residues 304–324 (GPCWVLYLDPTLCIIMVCILL). Residues 325–503 (YTTYPLLKES…VPNKQPESSL (179 aa)) are Cytoplasmic-facing. The residue at position 502 (Ser-502) is a Phosphoserine.

Belongs to the cation diffusion facilitator (CDF) transporter (TC 2.A.4) family. SLC30A subfamily. As to quaternary structure, homodimer. Interacts with TMEM163. Interacts and forms a complex with TMC6 and TMC8; the interaction regulates zinc transport into the ER. As to expression, widely expressed.

The protein localises to the cell membrane. It localises to the basolateral cell membrane. Its subcellular location is the cytoplasmic vesicle membrane. The protein resides in the cytoplasm. It is found in the endoplasmic reticulum membrane. The protein localises to the golgi apparatus membrane. It localises to the nucleus membrane. The catalysed reaction is Zn(2+)(in) + 2 H(+)(out) = Zn(2+)(out) + 2 H(+)(in). Functionally, zinc ion:proton antiporter that could function at the plasma membrane mediating zinc efflux from cells against its electrochemical gradient protecting them from intracellular zinc accumulation and toxicity. Alternatively, could prevent the transport to the plasma membrane of CACNB2, the L-type calcium channels regulatory subunit, through a yet to be defined mechanism. By modulating the expression of these channels at the plasma membrane, could prevent calcium and zinc influx into cells. By the same mechanism, could also prevent L-type calcium channels-mediated heavy metal influx into cells. In some cells, could also function as a zinc ion:proton antiporter mediating zinc entry into the lumen of cytoplasmic vesicles. In macrophages, can increase zinc ions concentration into the lumen of cytoplasmic vesicles containing engulfed bacteria and could help inactivate them. Forms a complex with TMC6/EVER1 and TMC8/EVER2 at the ER membrane of keratynocytes which facilitates zinc uptake into the ER. Down-regulates the activity of transcription factors induced by zinc and cytokines. The chain is Proton-coupled zinc antiporter SLC30A1 from Mus musculus (Mouse).